A 505-amino-acid chain; its full sequence is AMP phosphorylase (505 aa).

AMP-binding positions include Gly170, 196-201 (SRAITS), and Thr205. Asp258 acts as the Proton donor in catalysis. AMP contacts are provided by Ser266 and Lys290.

The protein belongs to the thymidine/pyrimidine-nucleoside phosphorylase family. Type 2 subfamily.

It carries out the reaction AMP + phosphate = alpha-D-ribose 1,5-bisphosphate + adenine. The catalysed reaction is CMP + phosphate = cytosine + alpha-D-ribose 1,5-bisphosphate. The enzyme catalyses UMP + phosphate = alpha-D-ribose 1,5-bisphosphate + uracil. Catalyzes the conversion of AMP and phosphate to adenine and ribose 1,5-bisphosphate (R15P). Exhibits phosphorylase activity toward CMP and UMP in addition to AMP. Functions in an archaeal AMP degradation pathway, together with R15P isomerase and RubisCO. In Methanococcus maripaludis (strain C7 / ATCC BAA-1331), this protein is AMP phosphorylase.